Reading from the N-terminus, the 429-residue chain is Enolase (429 aa).

Position 163 (glutamine 163) interacts with (2R)-2-phosphoglycerate. The Proton donor role is filled by glutamate 205. Residues aspartate 242, glutamate 287, and aspartate 314 each contribute to the Mg(2+) site. Residues lysine 339, arginine 368, serine 369, and lysine 390 each contribute to the (2R)-2-phosphoglycerate site. Lysine 339 acts as the Proton acceptor in catalysis.

This sequence belongs to the enolase family. Mg(2+) serves as cofactor.

The protein resides in the cytoplasm. Its subcellular location is the secreted. The protein localises to the cell surface. It catalyses the reaction (2R)-2-phosphoglycerate = phosphoenolpyruvate + H2O. Its pathway is carbohydrate degradation; glycolysis; pyruvate from D-glyceraldehyde 3-phosphate: step 4/5. Its function is as follows. Catalyzes the reversible conversion of 2-phosphoglycerate (2-PG) into phosphoenolpyruvate (PEP). It is essential for the degradation of carbohydrates via glycolysis. The polypeptide is Enolase (Anaeromyxobacter dehalogenans (strain 2CP-1 / ATCC BAA-258)).